Reading from the N-terminus, the 337-residue chain is Phosphatidylglycerophosphate phosphatase PTPMT1 (337 aa).

Positions 1 to 20 are disordered; sequence MYIKELTETDEEKRERSVED. Substrate contacts are provided by Y55 and D133. Residues 73-220 form the Tyrosine-protein phosphatase domain; that stretch reads WWDRVAEFIL…VVEYYHVKVL (148 aa). C164 serves as the catalytic Phosphocysteine intermediate. A Glucan phosphatase signature motif CXAGXGR motif is present at residues 164–170; that stretch reads CKAGRGR. 165-170 is a substrate binding site; sequence KAGRGR.

This sequence belongs to the protein-tyrosine phosphatase family. Non-receptor class dual specificity subfamily. Expressed in stems, roots, flowers, mature seeds and leaves.

The enzyme catalyses O-phospho-L-seryl-[protein] + H2O = L-seryl-[protein] + phosphate. The catalysed reaction is O-phospho-L-threonyl-[protein] + H2O = L-threonyl-[protein] + phosphate. It catalyses the reaction O-phospho-L-tyrosyl-[protein] + H2O = L-tyrosyl-[protein] + phosphate. It carries out the reaction a 1,2-diacyl-sn-glycero-3-phospho-(1'-sn-glycero-3'-phosphate) + H2O = a 1,2-diacyl-sn-glycero-3-phospho-(1'-sn-glycerol) + phosphate. It participates in phospholipid metabolism; phosphatidylglycerol biosynthesis; phosphatidylglycerol from CDP-diacylglycerol: step 2/2. Functionally, exhibits phosphatidylglycerophosphate phosphatase activity. Involved in root growth and columella cells organization. May possess protein phosphatase activity. This Arabidopsis thaliana (Mouse-ear cress) protein is Phosphatidylglycerophosphate phosphatase PTPMT1.